The chain runs to 522 residues: Sulfite reductase [NADPH] flavoprotein alpha-component (522 aa).

The Flavodoxin-like domain maps to 60–198 (ITILFGSQTG…DTERWSSDAL (139 aa)). The disordered stretch occupies residues 217–242 (TLRSHQDLRSHQEQSRNRARPYDKDN). Residues 220-242 (SHQDLRSHQEQSRNRARPYDKDN) are compositionally biased toward basic and acidic residues. One can recognise an FAD-binding FR-type domain in the interval 241-399 (DNPYTATLLE…VAPYRAFLQQ (159 aa)).

In terms of assembly, alpha(8)-beta(8). The alpha component is a flavoprotein, the beta component is a hemoprotein. It depends on FAD as a cofactor. FMN is required as a cofactor.

The enzyme catalyses hydrogen sulfide + 3 NADP(+) + 3 H2O = sulfite + 3 NADPH + 4 H(+). Its function is as follows. Catalyzes the 6-electron reduction of sulfite to sulfide. This is one of several activities required for the biosynthesis of L-cysteine from sulfate. The flavo-protein component catalyzes the electron flow from NADPH -&gt; FAD -&gt; FMN to the hemoprotein component. The sequence is that of Sulfite reductase [NADPH] flavoprotein alpha-component (cysJ) from Thiocapsa roseopersicina.